Consider the following 216-residue polypeptide: MSETTHTAIDTAYPGNLFMVVAPSGAGKSTLVNALLAQDKAIRLSISHTTRSPRPGEQNGREYHFISVDEFRAARDRGEFLEWAEVHGNYYATSRVWIEEQMAQGTDVLLEIDWQGAQQVHKRFSNAVEIFILPPSLTALEERLKKRGQDEPNVIVRRLLAAGSEMSHASESDYVIINEVFDDALKQLQNVVHATRLRFSSQKARHAELFIELGIH.

In terms of domain architecture, Guanylate kinase-like spans 15 to 193 (GNLFMVVAPS…ALKQLQNVVH (179 aa)). Residue 22–29 (APSGAGKS) coordinates ATP.

The protein belongs to the guanylate kinase family.

The protein resides in the cytoplasm. The enzyme catalyses GMP + ATP = GDP + ADP. Essential for recycling GMP and indirectly, cGMP. The protein is Guanylate kinase of Cupriavidus metallidurans (strain ATCC 43123 / DSM 2839 / NBRC 102507 / CH34) (Ralstonia metallidurans).